A 1077-amino-acid chain; its full sequence is MKLLYTDINHDMTEILVNQAAHAAEAGWRIFYIAPNSLSFEKERAVLENLPQEASFAITITRFAQLARYFTLNQPNQKESLNDIGLAMIFYRALASFEDGQLKVFGRLKQDASFISQLVDLYKELQTANLSILDLKYLHSPEKFEDLLAIFLVVSDLLREGEYDNQSKIAFFTEQVRSGQLDVDLKNTILIVDGFTRFSAEEEALIKSLSSRCQEIIIGAYASQKAYKANFTNGNIYSAGVDFLRYLATTFQTKPEFILSKWESKSGFEMISKNIEGKHDFTNSSHILDDTAKDCITIWECINQKDEVEHVARAIRQKLYQGYRYKDILVLLGDVDSYKLQLSKIFEQYDIPYYFGKAETMAAHPLVHFMDSLSRIKRYRFRAEDVLNLFKTGIYGEISQDDLDYFEAYISYADIKGPKKFFTDFVVGAKKFDLGRLNTIRQSLLAPLESFVKTKKQDGIKTLNQFMFFLTQVGLSDNLSRLVGQMSENEQEKHQEVWKTFTDILEQFQTIFGQEKLNLDEFLSLLNSGMMQAEYRMVPATVDVVTVKSYDLVEPHSNQFVYALGMTQSHFPKIAQNKSLISDIERQLINDANDTDGHFDIMTRENLKKNHFAALSLFNAAKQALVLTIPQLLNESEDQMSPYLIELRDIGVPFNHKGRQSLKEEADNIGNYKALLSRVVDLYRSAIDKEMTKEEQTFWSVAVRYLRRQLTSKGIEIPIITDSLDTVTVSSDVMTRRFPEDDPLKLSSSALTTFYNNQYKYFLQYVLGLEEQDSIHPDMRHHGTYLHRVFEILMKNQGIESFEEKLNSAINKTNQEDVFKSLYSEDAESRYSLEILEDIARATATILRQDSQMTVESEEERFELMIDNTIKINGIIDRIDRLSDGSLGVVDYKSSAQKFDIQKFYNGLSPQLVTYIDAISRDKEVEQKPPIFGAMYLHMQEPKQDLSKIKNLDDLVTKNHQALTYKGLFSEAEKEFLANGKYHLKDSLYSEAEIAILQAHNQLLYKKASETIKSGKFLINPYTEDAKTVDGDQFKSITGFEADRHMARARALYKLPAKEKRQGFLTLMQQEEENDDL.

It belongs to the helicase family. AddB/RexB type 2 subfamily. In terms of assembly, heterodimer of AddA and RexB. It depends on Mg(2+) as a cofactor.

In terms of biological role, the heterodimer acts as both an ATP-dependent DNA helicase and an ATP-dependent, dual-direction single-stranded exonuclease. Recognizes the chi site generating a DNA molecule suitable for the initiation of homologous recombination. This subunit has 5' -&gt; 3' nuclease activity but not helicase activity. The sequence is that of ATP-dependent helicase/deoxyribonuclease subunit B from Streptococcus agalactiae serotype III (strain NEM316).